The following is a 207-amino-acid chain: p-benzoquinone reductase (207 aa).

The 192-residue stretch at 5–196 (IQIVFYSSYG…QIARFQGKHV (192 aa)) folds into the Flavodoxin-like domain. FMN-binding positions include 11–16 (SSYGHI), 84–86 (TRF), 119–125 (STASQHG), and H140. An NADP(+)-binding site is contributed by Y13.

The protein belongs to the WrbA family. Homodimer. FMN serves as cofactor.

It carries out the reaction 1,4-benzoquinone + NADPH + H(+) = hydroquinone + NADP(+). Its pathway is xenobiotic degradation; 4-nitrophenol degradation. Functionally, involved in the degradation of para-nitrophenol (PNP). Catalyzes the reduction of p-benzoquinone to hydroquinone. The chain is p-benzoquinone reductase (pnpB) from Pseudomonas sp. (strain WBC-3).